The primary structure comprises 411 residues: Phosphopentomutase (411 aa).

Mn(2+) is bound by residues Asp-14, Asp-306, His-311, Asp-347, His-348, and His-359.

This sequence belongs to the phosphopentomutase family. Mn(2+) is required as a cofactor.

The protein resides in the cytoplasm. It catalyses the reaction 2-deoxy-alpha-D-ribose 1-phosphate = 2-deoxy-D-ribose 5-phosphate. It carries out the reaction alpha-D-ribose 1-phosphate = D-ribose 5-phosphate. It functions in the pathway carbohydrate degradation; 2-deoxy-D-ribose 1-phosphate degradation; D-glyceraldehyde 3-phosphate and acetaldehyde from 2-deoxy-alpha-D-ribose 1-phosphate: step 1/2. In terms of biological role, isomerase that catalyzes the conversion of deoxy-ribose 1-phosphate (dRib-1-P) and ribose 1-phosphate (Rib-1-P) to deoxy-ribose 5-phosphate (dRib-5-P) and ribose 5-phosphate (Rib-5-P), respectively. The chain is Phosphopentomutase from Lactococcus lactis subsp. cremoris (strain MG1363).